The sequence spans 937 residues: Bifunctional glutamine synthetase adenylyltransferase/adenylyl-removing enzyme (937 aa).

Residues 1-436 are adenylyl removase; it reads MSQPIPSASP…AAEFAELLAP (436 aa). The interval 443 to 937 is adenylyl transferase; that stretch reads PDTLADYWRA…QLRFQPGKGA (495 aa).

It belongs to the GlnE family. Mg(2+) is required as a cofactor.

The enzyme catalyses [glutamine synthetase]-O(4)-(5'-adenylyl)-L-tyrosine + phosphate = [glutamine synthetase]-L-tyrosine + ADP. It carries out the reaction [glutamine synthetase]-L-tyrosine + ATP = [glutamine synthetase]-O(4)-(5'-adenylyl)-L-tyrosine + diphosphate. In terms of biological role, involved in the regulation of glutamine synthetase GlnA, a key enzyme in the process to assimilate ammonia. When cellular nitrogen levels are high, the C-terminal adenylyl transferase (AT) inactivates GlnA by covalent transfer of an adenylyl group from ATP to specific tyrosine residue of GlnA, thus reducing its activity. Conversely, when nitrogen levels are low, the N-terminal adenylyl removase (AR) activates GlnA by removing the adenylyl group by phosphorolysis, increasing its activity. The regulatory region of GlnE binds the signal transduction protein PII (GlnB) which indicates the nitrogen status of the cell. This is Bifunctional glutamine synthetase adenylyltransferase/adenylyl-removing enzyme from Xanthomonas campestris pv. campestris (strain B100).